The primary structure comprises 441 residues: Double-stranded RNA-binding protein 1 (441 aa).

DRBM domains are found at residues 1 to 71, 86 to 155, and 169 to 237; these read MYKS…HLSS, SYKS…SLPQ, and SYKN…HFED. Residues 69–88 are disordered; it reads LSSLPLPPPPPPSENQSSYK.

Binds double-stranded RNA. The chain is Double-stranded RNA-binding protein 1 (DRB1) from Oryza sativa subsp. japonica (Rice).